The sequence spans 96 residues: LSM complex subunit lsm2 (96 aa).

The Sm domain maps to 2–76 (LFYSFFKTLI…VRYVHMSSAY (75 aa)).

Belongs to the snRNP Sm proteins family. Component of the heptameric LSM1-LSM7 complex that forms a seven-membered ring structure with a donut shape. The LSm subunits are arranged in the order lsm1, lsm2, lsm3, lsm6, lsm5, lsm7 and lsm4. Component of the heptameric LSM2-LSM8 complex that forms a seven-membered ring structure with a donut shape. The LSm subunits are arranged in the order lsm8, lsm2, lsm3, lsm6, lsm5, lsm7 and lsm4.

The protein localises to the nucleus. The protein resides in the cytoplasm. Its function is as follows. Component of LSm protein complexes, which are involved in RNA processing and may function in a chaperone-like manner. Component of the cytoplasmic LSM1-LSM7 complex which is involved in mRNA degradation by activating the decapping step. The LSM1-LSM7 complex loads onto the 3'-end of single stranded RNA. Component of the nuclear LSM2-LSM8 complex, which is involved in spliceosome assembly. The LSM2-LSM8 complex plays a role in the biogenesis of the spliceosomal U4/U6-U5 tri-snRNP complex by accelerating prp24-mediated annealing of U4/U6 di-snRNA. The LSM2-LSM8 complex binds U6 snRNA terminating with a cyclic 2',3' phosphate group; RNA with an unmodified 3' hydroxyl or non-cyclic 3' phosphate is bound less tightly. The sequence is that of LSM complex subunit lsm2 (lsm2) from Schizosaccharomyces pombe (strain 972 / ATCC 24843) (Fission yeast).